Here is a 237-residue protein sequence, read N- to C-terminus: MENASILIVDDEKAIVDMIKRVLEKEGYRNILDAASAEEAIPVVKANKVDLIVLDVMMGGMSGFEACTLIREYSDAPIFFLTARSSDADKLSGFAVGADDYITKPFNPLELAARIRAHLKRTYQSKETSSNQTYTYDYFTFSPQNAELIVGGEAVACSAQLLQLLQYFCEHPNVVLSKDQIYEKVWGYPSYGDNNTVMVHIRKLREKIERDPSNPEYIVTVRGLGYRFIPNPEGKRS.

The Response regulatory domain occupies 5 to 119 (SILIVDDEKA…ELAARIRAHL (115 aa)). D55 carries the 4-aspartylphosphate modification. Positions 131-230 (NQTYTYDYFT…VRGLGYRFIP (100 aa)) form a DNA-binding region, ompR/PhoB-type.

Post-translationally, phosphorylated by YvrG.

It is found in the cytoplasm. In terms of biological role, member of the two-component regulatory system YvrG/YvrH that positively regulates 7 transcriptional units (wprA, wapA-yxxG, dltABCDE, sunA, sunT-bdbA-yolJ-bdbB, sigO-rsoA, and sigX-rsiX), and negatively regulates the lytABC operon. The chain is Transcriptional regulatory protein YvrH (yvrH) from Bacillus subtilis (strain 168).